The chain runs to 138 residues: rRNA methyltransferase 1, mitochondrial (138 aa).

The N-terminal 21 residues, 1–21 (MNNQPCSIVWRRFLTSKVKPA), are a transit peptide targeting the mitochondrion. The segment at 92–113 (KQDILSSKRQQEEHKSKYSRKS) is disordered.

Belongs to the class IV-like SAM-binding methyltransferase superfamily. RNA methyltransferase TrmH family.

The protein localises to the mitochondrion. The enzyme catalyses a guanosine in 21S rRNA + S-adenosyl-L-methionine = a 2'-O-methylguanosine in 21S rRNA + S-adenosyl-L-homocysteine + H(+). Its function is as follows. S-adenosyl-L-methionine-dependent 2'-O-ribose methyltransferase that catalyzes the formation of the 2'-O-methylguanosine corresponding to position 2270 in S.cerevisiae 21S mitochondrial large ribosomal RNA, a universally conserved modification in the peptidyl transferase domain of the 21S rRNA. The polypeptide is rRNA methyltransferase 1, mitochondrial (Lachancea kluyveri (strain ATCC 58438 / CBS 3082 / BCRC 21498 / NBRC 1685 / JCM 7257 / NCYC 543 / NRRL Y-12651) (Yeast)).